The primary structure comprises 566 residues: Probable F-box protein At5g39490 (566 aa).

An F-box domain is found at 8 to 54 (ACLLLMLPEDIFVVISRFLSPSDICNLILCGKSLRALVDSEKTWLVQ). Residues 318–338 (LRKSSSSKNTTPSQSEIRHSN) are disordered. Low complexity predominate over residues 320–332 (KSSSSKNTTPSQS).

This is Probable F-box protein At5g39490 from Arabidopsis thaliana (Mouse-ear cress).